The chain runs to 1891 residues: Endoribonuclease Dicer-L (1891 aa).

The Helicase ATP-binding domain occupies 41–217 (LLEAALDHNT…DLEEKIQKLE (177 aa)). 54–61 (LNSGSGKT) is an ATP binding site. A DECH box motif is present at residues 165 to 168 (DECH). A Helicase C-terminal domain is found at 425–594 (SFPSPFTNIL…SIDCGNTESE (170 aa)). The region spanning 622–714 (AIGHINRYCA…MPVGKETVKY (93 aa)) is the Dicer dsRNA-binding fold domain. In terms of domain architecture, PAZ spans 887–1034 (KFVEDIEKSE…LVPELCAIHP (148 aa)). RNase III domains lie at 1248-1379 (TSDM…ETSG) and 1635-1793 (FENF…MDSG). Residues glutamate 1292, aspartate 1370, glutamate 1373, glutamate 1674, aspartate 1779, and glutamate 1782 each contribute to the Mg(2+) site. The region spanning 1818–1883 (VPRSPVRELL…ARRALRSLKA (66 aa)) is the DRBM domain.

This sequence belongs to the helicase family. Dicer subfamily. As to quaternary structure, component of the RISC loading complex (RLC), or micro-RNA (miRNA) loading complex (miRLC), which is composed of dicer1, ago2 and tarbp2; dicer1 and tarbp2 are required to process precursor miRNAs (pre-miRNAs) to mature miRNAs and then load them onto ago2. Note that the trimeric RLC/miRLC is also referred to as RISC. Mg(2+) serves as cofactor. It depends on Mn(2+) as a cofactor.

The protein localises to the cytoplasm. The catalysed reaction is Endonucleolytic cleavage to 5'-phosphomonoester.. In terms of biological role, double-stranded RNA (dsRNA) endoribonuclease playing a central role in short dsRNA-mediated post-transcriptional gene silencing. Cleaves naturally occurring long dsRNAs and short hairpin pre-microRNAs (miRNA) into fragments of 21 to 23 nucleotides with 3' overhang of two nucleotides, producing respectively short interfering RNAs (siRNA) and mature microRNAs. SiRNAs and miRNAs serve as guide to direct the RNA-induced silencing complex (RISC) to complementary RNAs to degrade them or prevent their translation. Gene silencing mediated by siRNAs, also called RNA interference, controls the elimination of transcripts from mobile and repetitive DNA elements of the genome but also the degradation of exogenous RNA of viral origin for instance. The miRNA pathway on the other side is a mean to specifically regulate the expression of target genes. During embryonic development, at the left-right organizer, post-transcriptionally regulates the expression of dand5 in flow sensor cells. In post-flow stages, acts along with Bicc1 to repress dand5 mRNA translation and decay. Decreased Dand5 expression lifts repression of Nodal and defines leftness by induction of the lateral plate mesoderm Nodal signaling cascade. The sequence is that of Endoribonuclease Dicer-L (dicer1.L) from Xenopus laevis (African clawed frog).